A 549-amino-acid chain; its full sequence is Probable chaperonin-like protein PrmG (549 aa).

This sequence belongs to the chaperonin (HSP60) family.

Its function is as follows. Probably plays an essential role in the productive folding of PrmA, and thus in the formation of the active PrmABCD complex. This Rhodococcus jostii (strain RHA1) protein is Probable chaperonin-like protein PrmG (prmG).